The primary structure comprises 181 residues: Peptidyl-tRNA hydrolase (181 aa).

A tRNA-binding site is contributed by Y14. Catalysis depends on H19, which acts as the Proton acceptor. TRNA-binding residues include Y62, N64, and N108.

This sequence belongs to the PTH family. Monomer.

The protein resides in the cytoplasm. It catalyses the reaction an N-acyl-L-alpha-aminoacyl-tRNA + H2O = an N-acyl-L-amino acid + a tRNA + H(+). Functionally, hydrolyzes ribosome-free peptidyl-tRNAs (with 1 or more amino acids incorporated), which drop off the ribosome during protein synthesis, or as a result of ribosome stalling. Catalyzes the release of premature peptidyl moieties from peptidyl-tRNA molecules trapped in stalled 50S ribosomal subunits, and thus maintains levels of free tRNAs and 50S ribosomes. In Campylobacter jejuni (strain RM1221), this protein is Peptidyl-tRNA hydrolase.